The chain runs to 242 residues: Ribonuclease PH (242 aa).

Residues Arg89 and 127-129 (GTR) contribute to the phosphate site.

This sequence belongs to the RNase PH family. As to quaternary structure, homohexameric ring arranged as a trimer of dimers.

It carries out the reaction tRNA(n+1) + phosphate = tRNA(n) + a ribonucleoside 5'-diphosphate. In terms of biological role, phosphorolytic 3'-5' exoribonuclease that plays an important role in tRNA 3'-end maturation. Removes nucleotide residues following the 3'-CCA terminus of tRNAs; can also add nucleotides to the ends of RNA molecules by using nucleoside diphosphates as substrates, but this may not be physiologically important. Probably plays a role in initiation of 16S rRNA degradation (leading to ribosome degradation) during starvation. This is Ribonuclease PH from Neisseria meningitidis serogroup B (strain ATCC BAA-335 / MC58).